Reading from the N-terminus, the 98-residue chain is MSKERLLKVLLAPHVSEKSALLADASEQYIFKVVPNATKPEVKQAVESLFDVKVQSVNMINIKGKTKVFKGRVGKRNGLRKAIVRLAPGQEIDFVGAE.

The protein belongs to the universal ribosomal protein uL23 family. Part of the 50S ribosomal subunit. Contacts protein L29, and trigger factor when it is bound to the ribosome.

Functionally, one of the early assembly proteins it binds 23S rRNA. One of the proteins that surrounds the polypeptide exit tunnel on the outside of the ribosome. Forms the main docking site for trigger factor binding to the ribosome. This chain is Large ribosomal subunit protein uL23, found in Hydrogenovibrio crunogenus (strain DSM 25203 / XCL-2) (Thiomicrospira crunogena).